Reading from the N-terminus, the 146-residue chain is Endothelial differentiation-related factor 1 homolog (146 aa).

A disordered region spans residues 13 to 53 (RKKGSAAQSKSKQAVTAAQRKGEAVETSKKWAAGQNKQHVV). Over residues 17–31 (SAAQSKSKQAVTAAQ) the composition is skewed to low complexity. Residues 32–41 (RKGEAVETSK) show a composition bias toward basic and acidic residues. Residues 80–134 (IQQGRQNKGLTQKDLATKINEKPQIIAEYECGKAIPNNQVMGKIERAIGLKLRGK) enclose the HTH cro/C1-type domain. The H-T-H motif DNA-binding region spans 91–110 (QKDLATKINEKPQIIAEYEC).

It is found in the nucleus. Probable transcriptional coactivator. The chain is Endothelial differentiation-related factor 1 homolog (edf1) from Danio rerio (Zebrafish).